The chain runs to 58 residues: Microcin J25 (58 aa).

A propeptide spanning residues 1-37 is cleaved from the precursor; it reads MIKHFHFNKLSSGKKNNVPSPAKGVIQIKKSASQLTK. The segment at residues 38–45 is a cross-link (isoglutamyl glycine isopeptide (Gly-Glu)); it reads GGAGHVPE.

The protein localises to the secreted. Functionally, peptide antibiotic that functions through inhibition of the bacterial DNA-dependent RNA polymerase (RNAP). Inhibits transcription by binding deep within RNAP secondary channel, where it sterically blocks the folding of the trigger loop, which is essential for efficient catalysis. In addition, it also seems to restrict access of nucleotide substrates to the catalytic center, and shows a partially competitive mode of inhibition with them. Exhibits potent bacteriocidal activity against a range of Enterobacteriaceae, including several pathogenic E.coli, Salmonella and Shigella strains. Also acts on the cytoplasmic membrane of Salmonella newport, producing alteration of membrane permeability and disruption of the subsequent gradient dissipation, which inhibits several processes essential for cell viability, such as oxygen consumption. Induces bacterial filamentation in susceptible cells in a non-SOS-dependent way, but this phenotype may result from impaired transcription of genes coding for cell division proteins. This chain is Microcin J25 (mcjA), found in Escherichia coli.